The following is a 255-amino-acid chain: Taurine import ATP-binding protein TauB (255 aa).

The ABC transporter domain maps to 2–229 (LQISHLYADY…RFVAGESSRS (228 aa)). 34 to 41 (GPSGCGKT) serves as a coordination point for ATP.

The protein belongs to the ABC transporter superfamily. Taurine importer (TC 3.A.1.17.1) family. The complex is composed of two ATP-binding proteins (TauB), two transmembrane proteins (TauC) and a solute-binding protein (TauA).

The protein resides in the cell inner membrane. The enzyme catalyses taurine(out) + ATP + H2O = taurine(in) + ADP + phosphate + H(+). Functionally, part of the ABC transporter complex TauABC involved in taurine import. Responsible for energy coupling to the transport system. This is Taurine import ATP-binding protein TauB from Shigella dysenteriae serotype 1 (strain Sd197).